A 793-amino-acid chain; its full sequence is Transcription factor opdR (793 aa).

3 disordered regions span residues 1 to 29 (MAQDQNVPLVATSPPRKRRRPPKSCDPCR), 60 to 113 (TASS…QSQN), and 457 to 476 (LDDEQFGPKTERLPRPQPSE). The zn(2)-C6 fungal-type DNA-binding region spans 25 to 53 (CDPCRRRKVRCDRKFPCGQCERARTALQC).

The protein localises to the nucleus. Functionally, transcription factor; part of the gene cluster that mediates the biosynthesis of oxopyrrolidines, polyketide-amino acid hybrid compounds with feature structures of tetramic acid. This Penicillium oxalicum (strain 114-2 / CGMCC 5302) (Penicillium decumbens) protein is Transcription factor opdR.